A 270-amino-acid chain; its full sequence is Phosphonoacetaldehyde hydrolase (270 aa).

Residue Asp-11 is the Nucleophile of the active site. Mg(2+) is bound by residues Asp-11 and Ala-13. Residue Lys-53 is the Schiff-base intermediate with substrate of the active site. Asp-187 provides a ligand contact to Mg(2+).

Belongs to the HAD-like hydrolase superfamily. PhnX family. Homodimer. It depends on Mg(2+) as a cofactor.

The enzyme catalyses phosphonoacetaldehyde + H2O = acetaldehyde + phosphate + H(+). Its function is as follows. Involved in phosphonate degradation. This is Phosphonoacetaldehyde hydrolase from Salmonella gallinarum (strain 287/91 / NCTC 13346).